The following is a 268-amino-acid chain: 4-hydroxy-tetrahydrodipicolinate reductase (268 aa).

Residues 10-15 (GASGRM), Asp36, 99-101 (GTT), and 123-126 (APNM) each bind NAD(+). The active-site Proton donor/acceptor is His156. Residue His157 participates in (S)-2,3,4,5-tetrahydrodipicolinate binding. The active-site Proton donor is the Lys160. Residue 166–167 (GT) participates in (S)-2,3,4,5-tetrahydrodipicolinate binding.

Belongs to the DapB family.

It is found in the cytoplasm. The enzyme catalyses (S)-2,3,4,5-tetrahydrodipicolinate + NAD(+) + H2O = (2S,4S)-4-hydroxy-2,3,4,5-tetrahydrodipicolinate + NADH + H(+). It carries out the reaction (S)-2,3,4,5-tetrahydrodipicolinate + NADP(+) + H2O = (2S,4S)-4-hydroxy-2,3,4,5-tetrahydrodipicolinate + NADPH + H(+). It participates in amino-acid biosynthesis; L-lysine biosynthesis via DAP pathway; (S)-tetrahydrodipicolinate from L-aspartate: step 4/4. Functionally, catalyzes the conversion of 4-hydroxy-tetrahydrodipicolinate (HTPA) to tetrahydrodipicolinate. This is 4-hydroxy-tetrahydrodipicolinate reductase from Herminiimonas arsenicoxydans.